The sequence spans 419 residues: Phosphatidylinositol 5-phosphate 4-kinase type-2 gamma (419 aa).

Residues 46–418 (ASDPLISVFM…RFLEFVTNIF (373 aa)) enclose the PIPK domain. The span at 299–310 (QEEEEDLEEDHT) shows a compositional bias: acidic residues. The interval 299–320 (QEEEEDLEEDHTENESSPHMNV) is disordered.

In terms of processing, phosphorylated, phosphorylation is induced by EGF.

The protein localises to the endoplasmic reticulum. Its subcellular location is the cytoplasm. It catalyses the reaction a 1,2-diacyl-sn-glycero-3-phospho-(1D-myo-inositol-5-phosphate) + ATP = a 1,2-diacyl-sn-glycero-3-phospho-(1D-myo-inositol-4,5-bisphosphate) + ADP + H(+). The catalysed reaction is 1,2-dihexadecanoyl-sn-glycero-3-phospho-(1D-myo-inositol-5-phosphate) + ATP = 1,2-dihexadecanoyl-sn-glycero-3-phospho-(1D-myo-inositol-4,5-bisphosphate) + ADP + H(+). The enzyme catalyses 1,2-dihexadecanoyl-sn-glycero-3-phospho-(1D-myo-inositol-5-phosphate) + GTP = 1,2-dihexadecanoyl-sn-glycero-3-phospho-(1D-myo-inositol-4,5-bisphosphate) + GDP + H(+). Phosphatidylinositol 5-phosphate 4-kinase with low enzymatic activity. May be a GTP sensor, has higher GTP-dependent kinase activity than ATP-dependent kinase activity. This is Phosphatidylinositol 5-phosphate 4-kinase type-2 gamma (pip4k2c) from Xenopus tropicalis (Western clawed frog).